Reading from the N-terminus, the 157-residue chain is Stalk-specific protein B (157 aa).

The N-terminal stretch at 1 to 19 (MRSILILLSLLLTIAFASA) is a signal peptide.

It is found in the secreted. The chain is Stalk-specific protein B (staB) from Dictyostelium discoideum (Social amoeba).